We begin with the raw amino-acid sequence, 327 residues long: 2-methoxy-6-polyprenyl-1,4-benzoquinol methylase, mitochondrial (327 aa).

The N-terminal 43 residues, 1 to 43, are a transit peptide targeting the mitochondrion; it reads MAAPIRAFVLRVLSDSTRNIHHVLRCRSKYLCRRAAITARRGY. S-adenosyl-L-methionine is bound by residues threonine 117, aspartate 171, and 199-200; that span reads DA.

It belongs to the class I-like SAM-binding methyltransferase superfamily. MenG/UbiE family. Component of a multi-subunit COQ enzyme complex, composed of at least coq3, coq4, coq5, coq6, coq7 and coq9.

The protein resides in the mitochondrion inner membrane. The catalysed reaction is a 2-methoxy-6-(all-trans-polyprenyl)benzene-1,4-diol + S-adenosyl-L-methionine = a 5-methoxy-2-methyl-3-(all-trans-polyprenyl)benzene-1,4-diol + S-adenosyl-L-homocysteine + H(+). It participates in cofactor biosynthesis; ubiquinone biosynthesis. Functionally, methyltransferase required for the conversion of 2-polyprenyl-6-methoxy-1,4-benzoquinol (DDMQH2) to 2-polyprenyl-3-methyl-6-methoxy-1,4-benzoquinol (DMQH2). This chain is 2-methoxy-6-polyprenyl-1,4-benzoquinol methylase, mitochondrial, found in Danio rerio (Zebrafish).